Here is a 353-residue protein sequence, read N- to C-terminus: Phospho-N-acetylmuramoyl-pentapeptide-transferase (353 aa).

Helical transmembrane passes span 22–42, 65–85, 88–108, 129–149, 161–181, 192–212, 228–248, 256–276, 281–301, and 330–350; these read FAFF…ITWA, TPTM…LSCI, DNIF…IGLI, LLTQ…SSEL, PLFD…ISSS, GLAT…LYLS, GLGE…GFLW, VFMG…LAII, ILLL…ILQV, and KIIV…LASI.

The protein belongs to the glycosyltransferase 4 family. MraY subfamily. Mg(2+) is required as a cofactor.

The protein localises to the cell inner membrane. The catalysed reaction is UDP-N-acetyl-alpha-D-muramoyl-L-alanyl-gamma-D-glutamyl-meso-2,6-diaminopimeloyl-D-alanyl-D-alanine + di-trans,octa-cis-undecaprenyl phosphate = di-trans,octa-cis-undecaprenyl diphospho-N-acetyl-alpha-D-muramoyl-L-alanyl-D-glutamyl-meso-2,6-diaminopimeloyl-D-alanyl-D-alanine + UMP. It participates in cell wall biogenesis; peptidoglycan biosynthesis. Catalyzes the initial step of the lipid cycle reactions in the biosynthesis of the cell wall peptidoglycan: transfers peptidoglycan precursor phospho-MurNAc-pentapeptide from UDP-MurNAc-pentapeptide onto the lipid carrier undecaprenyl phosphate, yielding undecaprenyl-pyrophosphoryl-MurNAc-pentapeptide, known as lipid I. The polypeptide is Phospho-N-acetylmuramoyl-pentapeptide-transferase (Campylobacter jejuni subsp. jejuni serotype O:23/36 (strain 81-176)).